The primary structure comprises 807 residues: Glycerol-3-phosphate acyltransferase (807 aa).

Residues 306–311 (HRSHMD) carry the HXXXXD motif motif.

Belongs to the GPAT/DAPAT family.

It localises to the cell inner membrane. It catalyses the reaction sn-glycerol 3-phosphate + an acyl-CoA = a 1-acyl-sn-glycero-3-phosphate + CoA. It participates in phospholipid metabolism; CDP-diacylglycerol biosynthesis; CDP-diacylglycerol from sn-glycerol 3-phosphate: step 1/3. In Escherichia coli O157:H7, this protein is Glycerol-3-phosphate acyltransferase (plsB).